Here is a 169-residue protein sequence, read N- to C-terminus: Peptide deformylase (169 aa).

The Fe cation site is built by Cys91 and His133. Glu134 is an active-site residue. His137 is a Fe cation binding site.

It belongs to the polypeptide deformylase family. Requires Fe(2+) as cofactor.

It carries out the reaction N-terminal N-formyl-L-methionyl-[peptide] + H2O = N-terminal L-methionyl-[peptide] + formate. Functionally, removes the formyl group from the N-terminal Met of newly synthesized proteins. Requires at least a dipeptide for an efficient rate of reaction. N-terminal L-methionine is a prerequisite for activity but the enzyme has broad specificity at other positions. This is Peptide deformylase from Enterobacter sp. (strain 638).